The following is a 292-amino-acid chain: Tricin synthase 2 (292 aa).

Positions arginine 21–glycine 46 are disordered. The span at threonine 23 to alanine 32 shows a compositional bias: polar residues. S-adenosyl-L-methionine is bound by residues serine 108, glutamate 130, glycine 132–valine 133, serine 138, aspartate 156, and alanine 185. Aspartate 208 serves as a coordination point for a divalent metal cation. Residue aspartate 210 coordinates S-adenosyl-L-methionine. A divalent metal cation contacts are provided by aspartate 234 and asparagine 235.

It belongs to the class I-like SAM-binding methyltransferase superfamily. Cation-dependent O-methyltransferase family. CCoAMT subfamily. It depends on Mg(2+) as a cofactor. Mn(2+) is required as a cofactor. In terms of tissue distribution, expressed in stems only.

It catalyses the reaction tricetin + 2 S-adenosyl-L-methionine = 3',5'-di-O-methyltricetin + 2 S-adenosyl-L-homocysteine + 2 H(+). Functionally, catalyzes the stepwise methylation of tricetin to its 3'-mono- and 3',5'-dimethyl ethers. No 3',4',5'-trimethylated ester derivatives are produced. Can use caffeoyl CoA, 5-hydroxyferulic acid, luteolin, tricetin, quercetin, myrcetin and 7,8-dihydroxyflavone as substrates, but not naringenin, apigenin or kaempferol. The 2,3-double bond and the O-dihydroxyl group of the substrate are both required for catalytic activity of the enzyme. This chain is Tricin synthase 2 (ROMT-17), found in Oryza sativa subsp. japonica (Rice).